The primary structure comprises 85 residues: Cell division topological specificity factor (85 aa).

This sequence belongs to the MinE family.

In terms of biological role, prevents the cell division inhibition by proteins MinC and MinD at internal division sites while permitting inhibition at polar sites. This ensures cell division at the proper site by restricting the formation of a division septum at the midpoint of the long axis of the cell. In Xanthomonas campestris pv. campestris (strain 8004), this protein is Cell division topological specificity factor.